We begin with the raw amino-acid sequence, 790 residues long: GATOR2 complex protein WDR24 (790 aa).

6 WD repeats span residues 72 to 112 (SLNL…RNKQ), 118 to 158 (EHKR…SVST), 161 to 201 (GQSE…RCER), 205 to 245 (AHNG…AKEM), 249 to 291 (QTIA…VPAA), and 295 to 338 (EHRD…VERA). S155 bears the Phosphoserine; by AMPK mark. Phosphoserine is present on residues S470 and S496. At T581 the chain carries Phosphothreonine. Phosphoserine occurs at positions 594 and 598. The segment at 718-740 (NCSHCKRPMSSRGWVCDRCHRCA) adopts a C4-type zinc-finger fold. Positions 719, 722, 733, 736, 743, 746, 757, 760, 762, 765, 768, 779, 783, 785, and 787 each coordinate Zn(2+). The segment at 741–790 (SMCAVCHHVVKGLFVWCQGCSHGGHLQHIMKWLEGSSHCPAGCGHLCEYS) adopts an RING-type; atypical zinc-finger fold.

It belongs to the WD repeat WDR24 family. As to quaternary structure, component of the GATOR2 subcomplex, composed of MIOS, SEC13, SEH1L, WDR24 and WDR59. The GATOR2 complex interacts with CASTOR1 and CASTOR2; the interaction is negatively regulated by arginine. The GATOR2 complex interacts with SESN1, SESN2 and SESN3; the interaction is negatively regulated by amino acids. SESN1, SESN2 and SESN3 convey leucine availability via direct interaction with SEH1L and WDR24. Post-translationally, phosphorylation at Ser-155 by AMPK in response to glucose deprivation inactivates WDR24 by promoting interaction with 14-3-3 proteins, such as YWHAG, preventing assembly of the GATOR2 complex. In terms of processing, autoubiquitinated; MIOS is required to prevent autoubiquitination.

It localises to the lysosome membrane. It catalyses the reaction S-ubiquitinyl-[E2 ubiquitin-conjugating enzyme]-L-cysteine + [acceptor protein]-L-lysine = [E2 ubiquitin-conjugating enzyme]-L-cysteine + N(6)-ubiquitinyl-[acceptor protein]-L-lysine.. It functions in the pathway protein modification; protein ubiquitination. With respect to regulation, the GATOR2 complex is negatively regulated by the upstream amino acid sensors CASTOR1 and SESN2, which sequester the GATOR2 complex in absence of amino acids. In the presence of abundant amino acids, GATOR2 is released from CASTOR1 and SESN2 and activated. In terms of biological role, catalytic component of the GATOR2 complex, a multiprotein complex that acts as an activator of the amino acid-sensing branch of the mTORC1 signaling pathway. The GATOR2 complex indirectly activates mTORC1 through the inhibition of the GATOR1 subcomplex. GATOR2 probably acts as an E3 ubiquitin-protein ligase toward GATOR1. In the presence of abundant amino acids, the GATOR2 complex mediates ubiquitination of the NPRL2 core component of the GATOR1 complex, leading to GATOR1 inactivation. In the absence of amino acids, GATOR2 is inhibited, activating the GATOR1 complex. In addition to its role in regulation of the mTORC1 complex, promotes the acidification of lysosomes and facilitates autophagic flux. Within the GATOR2 complex, WDR24 constitutes the catalytic subunit that mediates 'Lys-6'-linked ubiquitination of NPRL2. The chain is GATOR2 complex protein WDR24 from Homo sapiens (Human).